A 255-amino-acid chain; its full sequence is Phosphate import ATP-binding protein PstB (255 aa).

Positions 8–250 constitute an ABC transporter domain; that stretch reads IKSSNLNVHY…PGNKMTQDYI (243 aa). Residue 40–47 coordinates ATP; it reads GPSGCGKS.

It belongs to the ABC transporter superfamily. Phosphate importer (TC 3.A.1.7) family. The complex is composed of two ATP-binding proteins (PstB), two transmembrane proteins (PstC and PstA) and a solute-binding protein (PstS).

It is found in the cell inner membrane. It carries out the reaction phosphate(out) + ATP + H2O = ADP + 2 phosphate(in) + H(+). Its function is as follows. Part of the ABC transporter complex PstSACB involved in phosphate import. Responsible for energy coupling to the transport system. This chain is Phosphate import ATP-binding protein PstB, found in Pelagibacter ubique (strain HTCC1062).